Here is a 359-residue protein sequence, read N- to C-terminus: 3-dehydroquinate synthase (359 aa).

NAD(+) is bound by residues 71–76, 105–109, 129–130, Lys-142, and Lys-151; these read DGEQHK, GVIGD, and TT. 3 residues coordinate Zn(2+): Glu-184, His-247, and His-264.

The protein belongs to the sugar phosphate cyclases superfamily. Dehydroquinate synthase family. Requires NAD(+) as cofactor. It depends on Co(2+) as a cofactor. The cofactor is Zn(2+).

The protein localises to the cytoplasm. It carries out the reaction 7-phospho-2-dehydro-3-deoxy-D-arabino-heptonate = 3-dehydroquinate + phosphate. The protein operates within metabolic intermediate biosynthesis; chorismate biosynthesis; chorismate from D-erythrose 4-phosphate and phosphoenolpyruvate: step 2/7. In terms of biological role, catalyzes the conversion of 3-deoxy-D-arabino-heptulosonate 7-phosphate (DAHP) to dehydroquinate (DHQ). The sequence is that of 3-dehydroquinate synthase from Chromobacterium violaceum (strain ATCC 12472 / DSM 30191 / JCM 1249 / CCUG 213 / NBRC 12614 / NCIMB 9131 / NCTC 9757 / MK).